Reading from the N-terminus, the 794-residue chain is Copper amine oxidase-like protein cao2 (794 aa).

Substrate-binding positions include 307–318 (AYDLGEYGVGYR) and 391–396 (AANYEY). The Proton acceptor role is filled by D309. The active-site Schiff-base intermediate with substrate; via topaquinone is Y394. At Y394 the chain carries 2',4',5'-topaquinone. Positions 445 and 447 each coordinate Cu cation. A disordered region spans residues 563-584 (GDYAPQASDDTPKGLSKWISDD). Positions 593 and 594 each coordinate Mn(2+). H604 is a binding site for Cu cation. Positions 634-748 (ALDTSSSVNS…NGGHHHHHHH (115 aa)) are disordered. Residues 637–649 (TSSSVNSTSEATS) show a composition bias toward low complexity. The span at 652–714 (THHENLRDTS…DAAQKHEGRS (63 aa)) shows a compositional bias: basic and acidic residues. The span at 716 to 727 (TLAQPGQQNANQ) shows a compositional bias: polar residues.

It belongs to the copper/topaquinone oxidase family. Homodimer. Cu cation is required as a cofactor. Zn(2+) serves as cofactor. The cofactor is L-topaquinone. Requires Mn(2+) as cofactor. In terms of processing, topaquinone (TPQ) is generated by copper-dependent autoxidation of a specific tyrosyl residue.

It is found in the cytoplasm. The enzyme catalyses a primary methyl amine + O2 + H2O = an aldehyde + H2O2 + NH4(+). In terms of biological role, copper amine oxidase-like protein that does not show any copper amine oxidase activity. May be the appropriate amine substrate for cao2 has not been identified yet. This Schizosaccharomyces pombe (strain 972 / ATCC 24843) (Fission yeast) protein is Copper amine oxidase-like protein cao2 (cao2).